We begin with the raw amino-acid sequence, 510 residues long: Internal alternative NAD(P)H-ubiquinone oxidoreductase A1, mitochondrial (510 aa).

The N-terminal 48 residues, 1–48 (MLWIKNLARISQTTSSSVGNVFRNPESYTLSSRFCTALQKQQVTDTVQ), are a transit peptide targeting the mitochondrion. FAD is bound at residue 75–105 (RVLVLGSGWAGCRVLKGIDTSIYDVVCVSPR). 242-278 (LHCVVVGGGPTGVEFSGELSDFIMKDVRQRYSHVKDD) is an NAD(+) binding site. A Microbody targeting signal motif is present at residues 501 to 510 (FVFGRDISRI).

It belongs to the NADH dehydrogenase family. FAD serves as cofactor. Expressed in seedlings, cotyledons, young leaves, stems and flowers and, to a lower extent, in roots and buds.

The protein localises to the mitochondrion inner membrane. It is found in the peroxisome. The catalysed reaction is a quinone + NADH + H(+) = a quinol + NAD(+). It carries out the reaction a ubiquinone + NADH + H(+) = a ubiquinol + NAD(+). In terms of biological role, alternative NADH-ubiquinone oxidoreductase which catalyzes the oxidation of mitochondrial NADH does not translocate protons across the inner mitochondrial membrane. The polypeptide is Internal alternative NAD(P)H-ubiquinone oxidoreductase A1, mitochondrial (NDA1) (Arabidopsis thaliana (Mouse-ear cress)).